The sequence spans 101 residues: Large ribosomal subunit protein bL25 (101 aa).

This sequence belongs to the bacterial ribosomal protein bL25 family. In terms of assembly, part of the 50S ribosomal subunit; part of the 5S rRNA/L5/L18/L25 subcomplex. Contacts the 5S rRNA. Binds to the 5S rRNA independently of L5 and L18.

This is one of the proteins that binds to the 5S RNA in the ribosome where it forms part of the central protuberance. This Thermosynechococcus vestitus (strain NIES-2133 / IAM M-273 / BP-1) protein is Large ribosomal subunit protein bL25.